The following is a 164-amino-acid chain: D-aminoacyl-tRNA deacylase (164 aa).

Positions 72 and 89 each coordinate tRNA. Thr-90 acts as the Nucleophile in catalysis. A C-terminal adenosine nucleotide of tRNA motif is present at residues 104 to 107 (HLAK). A Gly-cisPro motif, allows the protein to recognize chirality of D-amino acids motif is present at residues 149–150 (GP).

This sequence belongs to the DTD family. In terms of assembly, homodimer.

The protein localises to the cytoplasm. The catalysed reaction is glycyl-tRNA(Ala) + H2O = tRNA(Ala) + glycine + H(+). The enzyme catalyses a D-aminoacyl-tRNA + H2O = a tRNA + a D-alpha-amino acid + H(+). It catalyses the reaction D-tyrosyl-tRNA(Tyr) + H2O = D-tyrosine + tRNA(Tyr). D-aminoacyl-tRNA deacylase, with no observable activity on tRNAs charged with their cognate L-amino acid. Probably acts by rejecting L-amino acids from its binding site rather than specific recognition of D-amino acids. Catalyzes the hydrolysis of D-tyrosyl-tRNA(Tyr), has no activity on correctly charged L-tyrosyl-tRNA(Tyr). Hydrolyzes correctly charged, achiral, glycyl-tRNA(Gly). Deacylates mischarged D.melanogaster and E.coli glycyl-tRNA(Ala). Probably acts via tRNA-based rather than protein-based catalysis. Acts on tRNAs only when the D-amino acid is either attached to the ribose 3'-OH or transferred to the 3'-OH from the 2'-OH through rapid transesterification. Binds a number of other D-amino acids (D-Arg, D-Glu, D-His, D-Lys, D-Ser), suggesting it may also deacylate other mischarged tRNAs. This chain is D-aminoacyl-tRNA deacylase, found in Plasmodium falciparum (isolate 3D7).